Consider the following 328-residue polypeptide: Dolichyl-diphosphooligosaccharide--protein glycosyltransferase subunit MAGT1 (328 aa).

The N-terminal stretch at 1 to 22 is a signal peptide; it reads MAALPVLVLVLLLACGGPRAAG. Residues 23-177 are Extracellular-facing; the sequence is QKRKEMVLSE…DVNIRVIRPP (155 aa). In terms of domain architecture, Thioredoxin spans 40 to 168; sequence WTSKRSVIRM…LARWVADRTD (129 aa). Asparagine 64 carries N-linked (GlcNAc...) asparagine glycosylation. Cysteine 80 and cysteine 83 are oxidised to a cystine. Residues 178–198 form a helical membrane-spanning segment; sequence NYAGPLMLGLLLAVIGGLVYL. The Cytoplasmic portion of the chain corresponds to 199 to 211; it reads RGSNLDFLYNKTG. The chain crosses the membrane as a helical span at residues 212–232; the sequence is WAFAALCFVLAMTSGQMWNHI. The Extracellular segment spans residues 233–257; the sequence is RGPPYAHKNPHTGQVNYIHGSSQAQ. The helical transmembrane segment at 258–278 threads the bilayer; that stretch reads FVAETHIVLLFNGGVTLGMVL. The Cytoplasmic portion of the chain corresponds to 279–293; the sequence is LHEAATSDMDVGKRK. The chain crosses the membrane as a helical span at residues 294–314; sequence IMCIAGIGLVVFFFSWLLSVF. Over 315–328 the chain is Extracellular; sequence RSKYHGYPYSFLMS.

The protein belongs to the OST3/OST6 family. In terms of assembly, accessory component of the STT3B-containing form of the oligosaccharyltransferase (OST) complex. OST exists in two different complex forms which contain common core subunits RPN1, RPN2, OST48, OST4, DAD1 and TMEM258, either STT3A or STT3B as catalytic subunits, and form-specific accessory subunits. OST can form stable complexes with the Sec61 complex or with both the Sec61 and TRAP complexes.

Its subcellular location is the cell membrane. The protein resides in the endoplasmic reticulum. The protein localises to the endoplasmic reticulum membrane. It participates in protein modification; protein glycosylation. Accessory component of the STT3B-containing form of the N-oligosaccharyl transferase (OST) complex which catalyzes the transfer of a high mannose oligosaccharide from a lipid-linked oligosaccharide donor to an asparagine residue within an Asn-X-Ser/Thr consensus motif in nascent polypeptide chains. Involved in N-glycosylation of STT3B-dependent substrates. Specifically required for the glycosylation of a subset of acceptor sites that are near cysteine residues; in this function seems to act redundantly with TUSC3. In its oxidized form proposed to form transient mixed disulfides with a glycoprotein substrate to facilitate access of STT3B to the unmodified acceptor site. Also has oxidoreductase-independent functions in the STT3B-containing OST complex possibly involving substrate recognition. Could indirectly play a role in Mg(2+) transport in epithelial cells. The protein is Dolichyl-diphosphooligosaccharide--protein glycosyltransferase subunit MAGT1 of Gallus gallus (Chicken).